Consider the following 346-residue polypeptide: tRNA N6-adenosine threonylcarbamoyltransferase (346 aa).

Residues His-111 and His-115 each contribute to the Fe cation site. Substrate is bound by residues Leu-134–Gly-138, Asp-167, Gly-180, and Asn-279. Asp-307 is a Fe cation binding site.

The protein belongs to the KAE1 / TsaD family. It depends on Fe(2+) as a cofactor.

The protein resides in the cytoplasm. The enzyme catalyses L-threonylcarbamoyladenylate + adenosine(37) in tRNA = N(6)-L-threonylcarbamoyladenosine(37) in tRNA + AMP + H(+). Functionally, required for the formation of a threonylcarbamoyl group on adenosine at position 37 (t(6)A37) in tRNAs that read codons beginning with adenine. Is involved in the transfer of the threonylcarbamoyl moiety of threonylcarbamoyl-AMP (TC-AMP) to the N6 group of A37, together with TsaE and TsaB. TsaD likely plays a direct catalytic role in this reaction. This chain is tRNA N6-adenosine threonylcarbamoyltransferase, found in Burkholderia lata (strain ATCC 17760 / DSM 23089 / LMG 22485 / NCIMB 9086 / R18194 / 383).